The sequence spans 82 residues: Immediate early response 3-interacting protein 1 (82 aa).

2 consecutive transmembrane segments (helical) span residues 2–22 (AFTL…IAVL) and 62–82 (VMRV…LLFG).

It belongs to the YOS1 family.

Its subcellular location is the endoplasmic reticulum membrane. Regulator of endoplasmic reticulum secretion that acts as a key determinant of brain size. Required for secretion of extracellular matrix proteins. Required for correct brain development by depositing sufficient extracellular matrix proteins for tissue integrity and the proliferation of neural progenitors. Acts as a regulator of the unfolded protein response (UPR). This Mus musculus (Mouse) protein is Immediate early response 3-interacting protein 1.